Reading from the N-terminus, the 87-residue chain is Small ribosomal subunit protein bS20 (87 aa).

The segment covering 1–11 (MANHKSALKRI) has biased composition (basic residues). The disordered stretch occupies residues 1-23 (MANHKSALKRIKQTEKRTERNRH).

Belongs to the bacterial ribosomal protein bS20 family.

In terms of biological role, binds directly to 16S ribosomal RNA. This chain is Small ribosomal subunit protein bS20, found in Geotalea daltonii (strain DSM 22248 / JCM 15807 / FRC-32) (Geobacter daltonii).